The following is a 361-amino-acid chain: Deoxyhypusine hydroxylase (361 aa).

4 HEAT-like PBS-type repeats span residues L59–N85, V94–D120, Q183–D211, and F216–D242. The Fe cation site is built by H61, E62, H96, and E97. The Fe cation site is built by H218, E219, H251, and E252.

The protein belongs to the deoxyhypusine hydroxylase family. The cofactor is Fe(2+).

It is found in the cytoplasm. The protein resides in the nucleus. The enzyme catalyses [eIF5A protein]-deoxyhypusine + AH2 + O2 = [eIF5A protein]-hypusine + A + H2O. Its pathway is protein modification; eIF5A hypusination. Functionally, catalyzes the hydroxylation of the N(6)-(4-aminobutyl)-L-lysine intermediate to form hypusine, an essential post-translational modification only found in mature eIF-5A factor. The sequence is that of Deoxyhypusine hydroxylase from Cryptococcus neoformans var. neoformans serotype D (strain JEC21 / ATCC MYA-565) (Filobasidiella neoformans).